The primary structure comprises 455 residues: Ribosomal protein uS12 methylthiotransferase RimO (455 aa).

The region spanning 30–140 (PTIGMVSLGC…VLDAVHGAVP (111 aa)) is the MTTase N-terminal domain. Residues C39, C75, C104, C171, C175, and C178 each contribute to the [4Fe-4S] cluster site. Residues 157–386 (LTPRHFSYLK…MEKAQAISEA (230 aa)) form the Radical SAM core domain. The TRAM domain maps to 389–455 (AAKVGRRIEV…GEYDLWGRPV (67 aa)).

The protein belongs to the methylthiotransferase family. RimO subfamily. Requires [4Fe-4S] cluster as cofactor.

The protein localises to the cytoplasm. The enzyme catalyses L-aspartate(89)-[ribosomal protein uS12]-hydrogen + (sulfur carrier)-SH + AH2 + 2 S-adenosyl-L-methionine = 3-methylsulfanyl-L-aspartate(89)-[ribosomal protein uS12]-hydrogen + (sulfur carrier)-H + 5'-deoxyadenosine + L-methionine + A + S-adenosyl-L-homocysteine + 2 H(+). In terms of biological role, catalyzes the methylthiolation of an aspartic acid residue of ribosomal protein uS12. The sequence is that of Ribosomal protein uS12 methylthiotransferase RimO from Cereibacter sphaeroides (strain ATCC 17029 / ATH 2.4.9) (Rhodobacter sphaeroides).